The following is a 269-amino-acid chain: Aminoglycoside N(3)-acetyltransferase III (269 aa).

It belongs to the antibiotic N-acetyltransferase family.

It catalyses the reaction a 2-deoxystreptamine antibiotic + acetyl-CoA = an N(3)-acetyl-2-deoxystreptamine antibiotic + CoA + H(+). Its function is as follows. Resistance to antibiotics containing the 2-deoxy-streptamine ring including gentamicin, kanamycin, tobramycin, neomycin and apramycin. The polypeptide is Aminoglycoside N(3)-acetyltransferase III (aac3-Vb) (Serratia marcescens).